Consider the following 76-residue polypeptide: MIFFTRNHRAINAHFLYDHNDRQILNRQFPPDNITMEERAVIKSVGRELSRIMCIVETNVLTRAGGYFSIFYRDFD.

This is an uncharacterized protein from Magallana gigas (Pacific oyster).